The sequence spans 130 residues: Small ribosomal subunit protein uS8 (130 aa).

This sequence belongs to the universal ribosomal protein uS8 family. Part of the 30S ribosomal subunit. Contacts proteins S5 and S12.

One of the primary rRNA binding proteins, it binds directly to 16S rRNA central domain where it helps coordinate assembly of the platform of the 30S subunit. This chain is Small ribosomal subunit protein uS8, found in Aliivibrio fischeri (strain ATCC 700601 / ES114) (Vibrio fischeri).